Consider the following 306-residue polypeptide: Choline-binding protein (306 aa).

The signal sequence occupies residues 1-22; sequence MKRKYLKLMIGLALAATLTLSG. C23 carries N-palmitoyl cysteine lipidation. C23 is lipidated: S-diacylglycerol cysteine.

This sequence belongs to the OsmX family.

Its subcellular location is the cell membrane. Its function is as follows. Member of a high affinity multicomponent binding-protein-dependent transport system for choline. This chain is Choline-binding protein (opuBC), found in Bacillus subtilis (strain 168).